The following is a 152-amino-acid chain: Small ribosomal subunit protein uS9 (152 aa).

This sequence belongs to the universal ribosomal protein uS9 family.

This chain is Small ribosomal subunit protein uS9, found in Mycobacterium ulcerans (strain Agy99).